The chain runs to 58 residues: Preprotein translocase subunit SecG (58 aa).

Topologically, residues 1–33 (MARRKKYEGLNPFVAAGLIKFSEEGEMERIKLS) are cytoplasmic. The helical transmembrane segment at 34–55 (PKAAIAVSAAIIAALIIINLLL) threads the bilayer. Over 56-58 (PPL) the chain is Extracellular.

It belongs to the SEC61-beta family. As to quaternary structure, component of the protein translocase complex. Heterotrimer consisting of alpha (SecY), beta (SecG) and gamma (SecE) subunits. Can form oligomers of the heterotrimer.

The protein localises to the cell membrane. In terms of biological role, involved in protein export. The function of the beta subunit is unknown, but it may be involved in stabilization of the trimeric complex. This is Preprotein translocase subunit SecG from Pyrobaculum arsenaticum (strain DSM 13514 / JCM 11321 / PZ6).